A 120-amino-acid polypeptide reads, in one-letter code: uncharacterized protein (120 aa).

An N-terminal signal peptide occupies residues 1-16; that stretch reads MFKFILLCFCINFAFS.

This is an uncharacterized protein from Acheta domesticus (House cricket).